The chain runs to 616 residues: Glutamine--fructose-6-phosphate aminotransferase [isomerizing] (616 aa).

The active-site Nucleophile; for GATase activity is the C2. The region spanning 2–222 (CGIIGYSGPR…QERIVALSGD (221 aa)) is the Glutamine amidotransferase type-2 domain. Residues 70 to 89 (TGIGHTRWATHGEPSDRNAH) form a disordered region. SIS domains lie at 289–428 (IRDD…LRGF) and 461–606 (LAHW…VDRP). K611 functions as the For Fru-6P isomerization activity in the catalytic mechanism.

In terms of assembly, homodimer.

The protein resides in the cytoplasm. The enzyme catalyses D-fructose 6-phosphate + L-glutamine = D-glucosamine 6-phosphate + L-glutamate. Functionally, catalyzes the first step in hexosamine metabolism, converting fructose-6P into glucosamine-6P using glutamine as a nitrogen source. The sequence is that of Glutamine--fructose-6-phosphate aminotransferase [isomerizing] from Tropheryma whipplei (strain Twist) (Whipple's bacillus).